The following is a 313-amino-acid chain: Ribosomal RNA small subunit methyltransferase H (313 aa).

S-adenosyl-L-methionine is bound by residues 35-37 (GGH), D55, F79, D101, and Q108.

The protein belongs to the methyltransferase superfamily. RsmH family.

Its subcellular location is the cytoplasm. The catalysed reaction is cytidine(1402) in 16S rRNA + S-adenosyl-L-methionine = N(4)-methylcytidine(1402) in 16S rRNA + S-adenosyl-L-homocysteine + H(+). Specifically methylates the N4 position of cytidine in position 1402 (C1402) of 16S rRNA. In Escherichia coli O139:H28 (strain E24377A / ETEC), this protein is Ribosomal RNA small subunit methyltransferase H.